The following is a 510-amino-acid chain: NAD(P)H-quinone oxidoreductase subunit 2 A, chloroplastic (510 aa).

A run of 13 helical transmembrane segments spans residues 24–44 (LLLF…GLIL), 57–77 (IPWL…ALLF), 99–119 (IFQF…VEYI), 124–144 (MALT…MFLC), 149–169 (LITI…LSGY), 183–203 (YLLM…WLYG), 227–247 (PGIS…LSPA), 295–315 (WHLL…LIAI), 323–343 (MLAY…IVGD), 354–374 (YMLF…LFGL), 395–415 (ALSL…AGFF), 418–438 (IYLF…IGLL), and 484–504 (MIVC…IITI).

The protein belongs to the complex I subunit 2 family. In terms of assembly, NDH is composed of at least 16 different subunits, 5 of which are encoded in the nucleus.

Its subcellular location is the plastid. It localises to the chloroplast thylakoid membrane. The catalysed reaction is a plastoquinone + NADH + (n+1) H(+)(in) = a plastoquinol + NAD(+) + n H(+)(out). It carries out the reaction a plastoquinone + NADPH + (n+1) H(+)(in) = a plastoquinol + NADP(+) + n H(+)(out). Its function is as follows. NDH shuttles electrons from NAD(P)H:plastoquinone, via FMN and iron-sulfur (Fe-S) centers, to quinones in the photosynthetic chain and possibly in a chloroplast respiratory chain. The immediate electron acceptor for the enzyme in this species is believed to be plastoquinone. Couples the redox reaction to proton translocation, and thus conserves the redox energy in a proton gradient. The protein is NAD(P)H-quinone oxidoreductase subunit 2 A, chloroplastic of Spinacia oleracea (Spinach).